Here is a 98-residue protein sequence, read N- to C-terminus: U1-theraphotoxin-Ap1a (98 aa).

Positions 1–23 (MRSLTLAAVLACSLLLVFHTSAA) are cleaved as a signal peptide. The propeptide occupies 24–50 (EELEVQDGHLMNPGDGDTALATVDDER). Disulfide bonds link Cys54–Cys84, Cys58–Cys90, and Cys72–Cys95. The interval 63–84 (DGKSKEGKPCKPKGDKNKDKKC) is disordered.

The protein belongs to the neurotoxin 12 (Hwtx-2) family. 01 (Ap1a) subfamily. As to expression, expressed by the venom gland.

Its subcellular location is the secreted. In terms of biological role, is toxic to both insects and mammals. Induces reversible paralysis when injected into S.frugiperda larvae. Reduces both the amplitude and frequency of responses from muscle (GF-TTM and GF-DLM) pathways in the D.melanogaster giant fiber circuit, suggesting an action at the neuromuscular junction, which is mediated by glutamatergic receptors. In mice, intracranial injection of 30 ug causes increased urination, myoclonus, hypermotility with circular movements followed by respiratory and generalized seizures resulting in death within 25-35 minutes of injection. This chain is U1-theraphotoxin-Ap1a, found in Acanthoscurria paulensis (Brazilian giant black tarantula spider).